The primary structure comprises 196 residues: dITP/XTP pyrophosphatase (196 aa).

A substrate-binding site is contributed by 10-15 (SGNKGK). Residues glutamate 40 and aspartate 69 each contribute to the Mg(2+) site. Catalysis depends on aspartate 69, which acts as the Proton acceptor. Substrate contacts are provided by residues serine 70, 147–150 (FGYD), lysine 170, and 175–176 (HR).

Belongs to the HAM1 NTPase family. Homodimer. Mg(2+) is required as a cofactor.

The catalysed reaction is XTP + H2O = XMP + diphosphate + H(+). It catalyses the reaction dITP + H2O = dIMP + diphosphate + H(+). It carries out the reaction ITP + H2O = IMP + diphosphate + H(+). Pyrophosphatase that catalyzes the hydrolysis of nucleoside triphosphates to their monophosphate derivatives, with a high preference for the non-canonical purine nucleotides XTP (xanthosine triphosphate), dITP (deoxyinosine triphosphate) and ITP. Seems to function as a house-cleaning enzyme that removes non-canonical purine nucleotides from the nucleotide pool, thus preventing their incorporation into DNA/RNA and avoiding chromosomal lesions. The chain is dITP/XTP pyrophosphatase from Prochlorococcus marinus (strain NATL1A).